A 64-amino-acid chain; its full sequence is DNA-directed RNA polymerase subunit Rpo10 (64 aa).

Zn(2+) is bound by residues Cys-7, Cys-10, Cys-45, and Cys-46.

Belongs to the archaeal Rpo10/eukaryotic RPB10 RNA polymerase subunit family. As to quaternary structure, part of the RNA polymerase complex. The cofactor is Zn(2+).

It is found in the cytoplasm. It carries out the reaction RNA(n) + a ribonucleoside 5'-triphosphate = RNA(n+1) + diphosphate. Functionally, DNA-dependent RNA polymerase (RNAP) catalyzes the transcription of DNA into RNA using the four ribonucleoside triphosphates as substrates. In Natronomonas pharaonis (strain ATCC 35678 / DSM 2160 / CIP 103997 / JCM 8858 / NBRC 14720 / NCIMB 2260 / Gabara) (Halobacterium pharaonis), this protein is DNA-directed RNA polymerase subunit Rpo10.